The chain runs to 545 residues: Periplasmic trehalase (545 aa).

Positions M1–T30 are cleaved as a signal peptide. Substrate is bound by residues R160, W167–D168, N204, R213–Q215, R285–E287, and G318. Residues D320 and E503 each act as proton donor/acceptor in the active site. E518 contacts substrate.

It belongs to the glycosyl hydrolase 37 family.

It is found in the periplasm. The catalysed reaction is alpha,alpha-trehalose + H2O = alpha-D-glucose + beta-D-glucose. Functionally, provides the cells with the ability to utilize trehalose at high osmolarity by splitting it into glucose molecules that can subsequently be taken up by the phosphotransferase-mediated uptake system. The protein is Periplasmic trehalase of Pseudomonas aeruginosa (strain ATCC 15692 / DSM 22644 / CIP 104116 / JCM 14847 / LMG 12228 / 1C / PRS 101 / PAO1).